The following is a 1039-amino-acid chain: MAVQLVPDSALGLLMMTEGRRCQVHLLDDRKLELLVQPKLLAKELLDLVASHFNLKEKEYFGIAFTDETGHLNWLQLDRRVLEHDFPKKSGPVVLYFCVRFYIESISYLKDNATIELFFLNAKSCIYKELIDVDSEVVFELASYILQEAKGDFSSNEVVRSDLKKLPALPTQALKEHPSLAYCEDRVIEHYKKLNGQTRGQAIVNYMSIVESLPTYGVHYYAVKDKQGIPWWLGLSYKGIFQYDYHDKVKPRKIFQWRQLENLYFREKKFSVEVHDPRRASVTRRTFGHSGIAVHTWYACPALIKSIWAMAISQHQFYLDRKQSKSKIHAARSLSEIAIDLTETGTLKTSKLANMGSKGKIISGSSGSLLSSGSQESDSSQSAKKDMLAALKSRQEALEETLRQRLEELKKLCLREAELTGKLPVEYPLDPGEEPPIVRRRIGTAFKLDEQKILPKGEEAELERLEREFAIQSQITEAARRLASDPNVSKKLKKQRKTSYLNALKKLQEIENAINENRIKSGKKPTQRASLIIDDGNIASEDSSLSDALVLEDEDSQVTSTISPLHSPHKGLPPRPPSHNRPPPPQSLEGLRQMHYHRNDYDKSPIKPKMWSESSLDEPYEKVKKRSSHSHSSSHKRFPSTGSCAEAGGGSNSLQNSPIRGLPHWNSQSSMPSTPDLRVRSPHYVHSTRSVDISPTRLHSLALHFRHRSSSLESQGKLLGSENDTGSPDFYTPRTRSSNGSDPMDDCSSCTSHSSSEHYYPAQMNANYSTLAEDSPSKARQRQRQRQRAAGALGSASSGSMPNLAARGGAGGAGGAGGGVYLHSQSQPSSQYRIKEYPLYIEGGATPVVVRSLESDQEGHYSVKAQFKTSNSYTAGGLFKESWRGGGGDEGDTGRLTPSRSQILRTPSLGREGAHDKGAGRAAVSDELRQWYQRSTASHKEHSRLSHTSSTSSDSGSQYSTSSQSTFVAHSRVTRMPQMCKATSAALPQSQRSSTPSSEIGATPPSSPHHILTWQTGEATENSPILDGSESPPHQSTDE.

Residues Arg-20–Lys-322 form the FERM domain. Residues Lys-358–Thr-420 are necessary for interaction with CYTH1. A compositionally biased stretch (low complexity) spans Ser-366–Ser-382. The disordered stretch occupies residues Ser-366 to Asp-386. The stretch at Ser-382 to Glu-416 forms a coiled coil. Phosphoserine is present on Ser-530. A disordered region spans residues Asp-553–Arg-680. A compositionally biased stretch (pro residues) spans Gly-571–Gln-586. The segment at His-579–His-939 is necessary for tight junction and adherens junction localization; Requires for interaction with PARD3. Phosphoserine is present on residues Ser-604 and Ser-615. The span at Val-623–Phe-638 shows a compositional bias: basic residues. A phosphoserine mark is found at Ser-681 and Ser-711. Disordered regions lie at residues Glu-713–Ser-756 and Ala-772–Ala-813. The segment covering Arg-788–Ser-800 has biased composition (low complexity). 3 positions are modified to phosphoserine: Ser-800, Ser-872, and Ser-901. 2 disordered regions span residues Phe-879–Val-968 and Cys-980–Glu-1039. Positions Leu-896–Arg-905 are enriched in polar residues. The span at Glu-912 to Arg-929 shows a compositional bias: basic and acidic residues. Low complexity predominate over residues Ser-946–Thr-966. 2 stretches are compositionally biased toward polar residues: residues Ala-986–Ile-1000 and Thr-1013–Ser-1023.

As to quaternary structure, interacts (via coiled-coil domain) with CYTH1 (via coiled-coil domain). Interacts with PARD3 (via coiled-coil domain). Found in a complex with PARD3, CYTH1 and FRMD4A. Interacts with CYTH2. Interacts with CYTH3.

The protein localises to the cytoplasm. Its subcellular location is the cytoskeleton. It is found in the cell junction. The protein resides in the adherens junction. It localises to the tight junction. Functionally, scaffolding protein that regulates epithelial cell polarity by connecting ARF6 activation with the PAR3 complex. Plays a redundant role with FRMD4B in epithelial polarization. May regulate MAPT secretion by activating ARF6-signaling. This Homo sapiens (Human) protein is FERM domain-containing protein 4A.